A 165-amino-acid chain; its full sequence is UI (165 aa).

The first 18 residues, 1-18, serve as a signal peptide directing secretion; it reads MKPVPLILLLATVLLSSH. Val-163 is modified (valine amide).

Belongs to the sauvagine/corticotropin-releasing factor/urotensin I family.

The protein localises to the secreted. Functionally, urotensin is found in the teleost caudal neurosecretory system. It has a suggested role in osmoregulation and as a corticotropin-releasing factor. The non-hormonal portion of this precursor may be a urotensin binding protein, urophysin. This Oncorhynchus mykiss (Rainbow trout) protein is UI.